The primary structure comprises 365 residues: Putative ankyrin repeat protein R903 (365 aa).

10 ANK repeats span residues 38-67 (NINS…DIRF), 68-97 (QNNE…DIFI), 99-127 (NNFC…KFSN), 129-158 (SKPI…NINK), 184-213 (KFKD…GNIT), 214-243 (VSNN…RFPR), 245-273 (SNEL…SIVD), 275-298 (LLNI…LKNV), 299-328 (NLQK…NPDE), and 330-361 (RTYL…KLQS).

In Acanthamoeba polyphaga mimivirus (APMV), this protein is Putative ankyrin repeat protein R903.